A 332-amino-acid chain; its full sequence is UPF0285 protein MK0078 (332 aa).

The protein belongs to the UPF0285 family.

The chain is UPF0285 protein MK0078 from Methanopyrus kandleri (strain AV19 / DSM 6324 / JCM 9639 / NBRC 100938).